The following is a 230-amino-acid chain: Phosphoribosylformylglycinamidine synthase subunit PurQ (230 aa).

The Glutamine amidotransferase type-1 domain occupies 2–230 (KIAVTKFLGT…KGMIDYAKRI (229 aa)). The active-site Nucleophile is Cys85. Catalysis depends on residues His202 and Glu204.

In terms of assembly, part of the FGAM synthase complex composed of 1 PurL, 1 PurQ and 2 PurS subunits.

The protein localises to the cytoplasm. The enzyme catalyses N(2)-formyl-N(1)-(5-phospho-beta-D-ribosyl)glycinamide + L-glutamine + ATP + H2O = 2-formamido-N(1)-(5-O-phospho-beta-D-ribosyl)acetamidine + L-glutamate + ADP + phosphate + H(+). It carries out the reaction L-glutamine + H2O = L-glutamate + NH4(+). It participates in purine metabolism; IMP biosynthesis via de novo pathway; 5-amino-1-(5-phospho-D-ribosyl)imidazole from N(2)-formyl-N(1)-(5-phospho-D-ribosyl)glycinamide: step 1/2. In terms of biological role, part of the phosphoribosylformylglycinamidine synthase complex involved in the purines biosynthetic pathway. Catalyzes the ATP-dependent conversion of formylglycinamide ribonucleotide (FGAR) and glutamine to yield formylglycinamidine ribonucleotide (FGAM) and glutamate. The FGAM synthase complex is composed of three subunits. PurQ produces an ammonia molecule by converting glutamine to glutamate. PurL transfers the ammonia molecule to FGAR to form FGAM in an ATP-dependent manner. PurS interacts with PurQ and PurL and is thought to assist in the transfer of the ammonia molecule from PurQ to PurL. This is Phosphoribosylformylglycinamidine synthase subunit PurQ from Methanocaldococcus jannaschii (strain ATCC 43067 / DSM 2661 / JAL-1 / JCM 10045 / NBRC 100440) (Methanococcus jannaschii).